A 417-amino-acid chain; its full sequence is Transmembrane protease serine 11G (417 aa).

Topologically, residues Met-1–Thr-22 are cytoplasmic. Residues Thr-23–Tyr-43 form a helical; Signal-anchor for type II membrane protein membrane-spanning segment. The Extracellular portion of the chain corresponds to Glu-44–Ile-417. Positions Lys-46–Gln-165 constitute an SEA domain. Residues Ile-186–Asn-416 form the Peptidase S1 domain. A disulfide bridge links Cys-211 with Cys-227. Catalysis depends on charge relay system residues His-226 and Asp-271. 2 disulfide bridges follow: Cys-336–Cys-352 and Cys-363–Cys-392. Ser-367 functions as the Charge relay system in the catalytic mechanism.

The protein belongs to the peptidase S1 family. As to expression, highest expression in lung and tongue. Also expressed in brain, colon, heart and liver. Isoform 1 is the predominant form in tongue whereas both isoforms are expressed in similar amounts in lung. At the cellular level, expression is confined to epithelial cells within the cleft of the circumvallate papillae extending into the ducts of the minor salivary glands, the respiratory epithelium of the nasal cavity and tear gland ducts.

The protein localises to the membrane. This Rattus norvegicus (Rat) protein is Transmembrane protease serine 11G (Tmprss11g).